We begin with the raw amino-acid sequence, 523 residues long: Probable DNA ligase (523 aa).

Glu-210 lines the ATP pocket. Lys-212 functions as the N6-AMP-lysine intermediate in the catalytic mechanism. ATP-binding residues include Arg-217, Arg-232, Glu-261, Phe-317, Arg-388, and Lys-394.

The protein belongs to the ATP-dependent DNA ligase family. Mg(2+) is required as a cofactor.

The catalysed reaction is ATP + (deoxyribonucleotide)n-3'-hydroxyl + 5'-phospho-(deoxyribonucleotide)m = (deoxyribonucleotide)n+m + AMP + diphosphate.. Functionally, DNA ligase that seals nicks in double-stranded DNA during DNA replication, DNA recombination and DNA repair. This Nocardia farcinica (strain IFM 10152) protein is Probable DNA ligase.